We begin with the raw amino-acid sequence, 278 residues long: Large ribosomal subunit protein uL2 (278 aa).

2 disordered regions span residues 29-57 (PEKS…QGGG) and 224-278 (VAMN…NKKR). The span at 258 to 278 (RSPKKASNKYIVRRRKTNKKR) shows a compositional bias: basic residues.

Belongs to the universal ribosomal protein uL2 family. In terms of assembly, part of the 50S ribosomal subunit. Forms a bridge to the 30S subunit in the 70S ribosome.

In terms of biological role, one of the primary rRNA binding proteins. Required for association of the 30S and 50S subunits to form the 70S ribosome, for tRNA binding and peptide bond formation. It has been suggested to have peptidyltransferase activity; this is somewhat controversial. Makes several contacts with the 16S rRNA in the 70S ribosome. The sequence is that of Large ribosomal subunit protein uL2 from Streptomyces griseus subsp. griseus (strain JCM 4626 / CBS 651.72 / NBRC 13350 / KCC S-0626 / ISP 5235).